Here is a 673-residue protein sequence, read N- to C-terminus: G-protein-signaling modulator 1 (673 aa).

A mediates association with membranes region spans residues 1-507 (MASPAPPVAE…DLLSKFQSSR (507 aa)). TPR repeat units lie at residues 28–61 (CLELALEGERLCKAGDFKAGVAFFEAAVQVGTED), 66–99 (SAIYSQLGNAYFYLKEYARALQFHKHDLLLARTI), 106–139 (AKASGNLGNTLKVLGRFDEAIVCCQRHLDIAQEQ), 146–178 (ARALYNIGNVYHAKGKQLSWNAAQDPGHLPPDV), 180–199 (ETLHRASEFYERNLSLVKEL), 206–239 (GRAYGNLGNTHYLLGNFTEATTFHKERLAIAKEF), 246–279 (RRAYSNLGNAHIFLGRFDVAAEHYKKTLQLSRQL), 286–319 (AQACYSLGNTYTLLQDYERAAEYHLRHLVIAQEL), and 326–359 (GRACWSLGNAYVSMGSPAQALTFAKKHLQISQEI). The interval 361-485 (DRNGELTARM…VRVQVPRTGI (125 aa)) is interaction with STK11/LKB1. A Phosphoserine modification is found at serine 410. Omega-N-methylarginine is present on arginine 418. Residues 420–439 (PLDREQNGETHHTGDWRGPG) show a composition bias toward basic and acidic residues. Positions 420–475 (PLDREQNGETHHTGDWRGPGRDSLPLPMRSRKYQEGPDAIERRPREGSHSPLDSAD) are disordered. Serine 442, serine 467, serine 469, serine 490, and serine 491 each carry phosphoserine. Positions 451–467 (KYQEGPDAIERRPREGS) are enriched in basic and acidic residues. The GoLoco 1 domain occupies 493–515 (EECFFDLLSKFQSSRMDDQRCPL). Residues 508-531 (MDDQRCPLEEGQAGAAEATAAPSV) form a disordered region. Over residues 516-528 (EEGQAGAAEATAA) the composition is skewed to low complexity. A phosphoserine mark is found at serine 543 and serine 567. 3 GoLoco domains span residues 546–568 (TEEFFDLIASSQSRRLDDQRASV), 594–616 (GDEFFNMLIKYQSSRIDDQRCPP), and 628–650 (DEDFFSLIQRVQAKRMDEQRVDL). Positions 644–673 (DEQRVDLAGSPEQEASGLPDPQQQCPPGAS) are disordered. Serine 653 bears the Phosphoserine mark. Residues 664–673 (PQQQCPPGAS) are compositionally biased toward polar residues.

The protein belongs to the GPSM family. Interacts with GNAI1 and GNAI2 preferentially in their GDP-bound state. May also interact with GNAO1. Interacts with INSC/inscuteable and FRMPD1. Interacts with GNAI3. Interacts with STK11/LKB1 and MACF1. In terms of processing, phosphorylation regulates interaction with G(i/o) alpha. As to expression, expressed in neural progenitor cells (at protein level).

The protein localises to the cytoplasm. It localises to the cytosol. Its subcellular location is the endoplasmic reticulum membrane. The protein resides in the golgi apparatus membrane. It is found in the cell membrane. In terms of biological role, guanine nucleotide dissociation inhibitor (GDI) which functions as a receptor-independent activator of heterotrimeric G-protein signaling. Keeps G(i/o) alpha subunit in its GDP-bound form thus uncoupling heterotrimeric G-proteins signaling from G protein-coupled receptors. Controls spindle orientation and asymmetric cell fate of cerebral cortical progenitors. May also be involved in macroautophagy in intestinal cells. May play a role in drug addiction. The polypeptide is G-protein-signaling modulator 1 (Gpsm1) (Mus musculus (Mouse)).